Here is a 165-residue protein sequence, read N- to C-terminus: PTS system glucose-specific EIIA component (165 aa).

The region spanning 34–138 (DPVFAQKMMG…SSITPIIISN (105 aa)) is the PTS EIIA type-1 domain. Residues His-71 and His-86 each coordinate Zn(2+). The active-site Tele-phosphohistidine intermediate; for EIIA activity is His-86. Phosphohistidine; by HPr is present on His-86.

In terms of assembly, heterodimer with glycerol kinase (glpk). It depends on Zn(2+) as a cofactor.

Its subcellular location is the cytoplasm. Its function is as follows. The phosphoenolpyruvate-dependent sugar phosphotransferase system (sugar PTS), a major carbohydrate active transport system, catalyzes the phosphorylation of incoming sugar substrates concomitantly with their translocation across the cell membrane. The enzyme II complex composed of PtsG and Crr is involved in glucose transport. The polypeptide is PTS system glucose-specific EIIA component (crr) (Oceanobacillus iheyensis (strain DSM 14371 / CIP 107618 / JCM 11309 / KCTC 3954 / HTE831)).